The primary structure comprises 154 residues: Superoxide dismutase [Cu-Zn] (154 aa).

Cu cation-binding residues include histidine 47, histidine 49, and histidine 64. A disulfide bond links cysteine 58 and cysteine 147. Residues histidine 64, histidine 72, histidine 81, and aspartate 84 each coordinate Zn(2+). Histidine 121 provides a ligand contact to Cu cation. Residues 124 to 137 are compositionally biased toward basic and acidic residues; sequence TDDLGKGENEESKK. Residues 124–144 form a disordered region; it reads TDDLGKGENEESKKTGNAGTR. Arginine 144 contributes to the substrate binding site.

This sequence belongs to the Cu-Zn superoxide dismutase family. In terms of assembly, homodimer. Cu cation serves as cofactor. Zn(2+) is required as a cofactor.

It localises to the cytoplasm. The enzyme catalyses 2 superoxide + 2 H(+) = H2O2 + O2. Destroys radicals which are normally produced within the cells and which are toxic to biological systems. This is Superoxide dismutase [Cu-Zn] (sod1) from Botryotinia fuckeliana (Noble rot fungus).